Here is a 238-residue protein sequence, read N- to C-terminus: Sugar fermentation stimulation protein homolog (238 aa).

The protein belongs to the SfsA family.

The sequence is that of Sugar fermentation stimulation protein homolog from Klebsiella pneumoniae subsp. pneumoniae (strain ATCC 700721 / MGH 78578).